Consider the following 145-residue polypeptide: Large ribosomal subunit protein uL16 (145 aa).

This sequence belongs to the universal ribosomal protein uL16 family. As to quaternary structure, part of the 50S ribosomal subunit.

Its function is as follows. Binds 23S rRNA and is also seen to make contacts with the A and possibly P site tRNAs. This chain is Large ribosomal subunit protein uL16, found in Shouchella clausii (strain KSM-K16) (Alkalihalobacillus clausii).